Consider the following 73-residue polypeptide: Translation initiation factor IF-1 (73 aa).

The 73-residue stretch at 1–73 (MAKKDGAIEV…SRGRIVYRYK (73 aa)) folds into the S1-like domain.

The protein belongs to the IF-1 family. As to quaternary structure, component of the 30S ribosomal translation pre-initiation complex which assembles on the 30S ribosome in the order IF-2 and IF-3, IF-1 and N-formylmethionyl-tRNA(fMet); mRNA recruitment can occur at any time during PIC assembly.

Its subcellular location is the cytoplasm. One of the essential components for the initiation of protein synthesis. Stabilizes the binding of IF-2 and IF-3 on the 30S subunit to which N-formylmethionyl-tRNA(fMet) subsequently binds. Helps modulate mRNA selection, yielding the 30S pre-initiation complex (PIC). Upon addition of the 50S ribosomal subunit IF-1, IF-2 and IF-3 are released leaving the mature 70S translation initiation complex. This is Translation initiation factor IF-1 from Mycobacterium avium (strain 104).